A 641-amino-acid polypeptide reads, in one-letter code: MRISSSPSPALGSIVNQPTSGELAAETPLAKASLTQSGAGGGQAFVQFGQANDSPSSFSGTEQSGSSLMSLLTRSSSSESTSSVDQDSDQVSPMTSVSSTASASPTAASNPANAPSATDAAFLDNSEYSSPEALKRWEPMVANLPPEEREQAAKELNRPIAAAWMARENGPNAEKAMAFINANPALKTAVDVGKDGGNADGKITNKDLKAFAKNMEKAADNADKDVAKYMEDNPGADPQSLEMVRSAAVMRANMPLATAADPHHAVGAADKTDVDGNVSAEGLKALIKSNPGLSGTLKQSSNMWSQAGFLSQVDEAGLTGRKKAAHSPDQVFDASNMSEWIRKSAPKNGGQFASMLSDAATLNSVAGIDISKLNAQVFEKPKAYTGAQKAAVMIKLQQTQQSVIAGRDLRNTEKTEAGLNERIAQLQADPDVQEYLNKSIPEQERSLVRSDSALQKAVTEQAQNVNSGKALQTDLATADKAVDKHNPDPDYSGAITGLSAQLQLQKDLFPDAQVPTAQQVFNNQPDEVQTKIADSYVRNFSEGGALKQLLGQKKSDAGESLQTADNQKAAYESVLPADFVNGERESYTASTLSELQNSKKGRKLLEGKTDEEGALRWPSSSPSKVSEARRIQFGHGLRVSV.

The span at 1–20 shows a compositional bias: polar residues; the sequence is MRISSSPSPALGSIVNQPTS. Disordered regions lie at residues 1-127 and 598-628; these read MRIS…DNSE and SKKGRKLLEGKTDEEGALRWPSSSPSKVSEA. A compositionally biased stretch (low complexity) spans 44–121; that stretch reads AFVQFGQAND…ANAPSATDAA (78 aa). Basic and acidic residues predominate over residues 603–614; sequence KLLEGKTDEEGA.

The polypeptide is Pathogenicity locus protein HrpK (hrpK) (Pseudomonas syringae pv. syringae).